The following is a 281-amino-acid chain: Shikimate dehydrogenase (NADP(+)) (281 aa).

Shikimate-binding positions include Ser-14–Ser-16 and Thr-61. The active-site Proton acceptor is the Lys-65. Shikimate is bound by residues Asn-86 and Asp-101. NADP(+) contacts are provided by residues Gly-127–Ala-131, Asn-151–Arg-156, and Val-216. Shikimate is bound at residue Tyr-218. Gly-239 provides a ligand contact to NADP(+).

This sequence belongs to the shikimate dehydrogenase family. Homodimer.

It catalyses the reaction shikimate + NADP(+) = 3-dehydroshikimate + NADPH + H(+). The protein operates within metabolic intermediate biosynthesis; chorismate biosynthesis; chorismate from D-erythrose 4-phosphate and phosphoenolpyruvate: step 4/7. Its function is as follows. Involved in the biosynthesis of the chorismate, which leads to the biosynthesis of aromatic amino acids. Catalyzes the reversible NADPH linked reduction of 3-dehydroshikimate (DHSA) to yield shikimate (SA). In Azorhizobium caulinodans (strain ATCC 43989 / DSM 5975 / JCM 20966 / LMG 6465 / NBRC 14845 / NCIMB 13405 / ORS 571), this protein is Shikimate dehydrogenase (NADP(+)).